We begin with the raw amino-acid sequence, 119 residues long: Protein TusC (119 aa).

It belongs to the DsrF/TusC family. In terms of assembly, heterohexamer, formed by a dimer of trimers. The hexameric TusBCD complex contains 2 copies each of TusB, TusC and TusD. The TusBCD complex interacts with TusE.

It localises to the cytoplasm. Functionally, part of a sulfur-relay system required for 2-thiolation of 5-methylaminomethyl-2-thiouridine (mnm(5)s(2)U) at tRNA wobble positions. This is Protein TusC from Pectobacterium carotovorum subsp. carotovorum (strain PC1).